Consider the following 35-residue polypeptide: Alpha-amanitin proprotein 1 (35 aa).

The propeptide occupies 1–10; sequence MSDINATRLP. I11 carries the post-translational modification (3R,4R)-4,5-dihydroxyisoleucine; in form alpha-amanitin. I11 bears the (3R,4S)-4-hydroxyisoleucine; in form gamma-amanitin mark. A cross-link (cyclopeptide (Ile-Pro)) is located at residues 11 to 18; that stretch reads IWGIGCNP. The segment at residues 12-16 is a cross-link (2'-cysteinyl-6'-hydroxytryptophan sulfoxide (Trp-Cys)); sequence WGIGC. 4-hydroxyproline is present on P18. The propeptide occupies 19-35; that stretch reads CVGDDVTSVLTRGEALC.

Belongs to the MSDIN fungal toxin family. Post-translationally, processed by the macrocyclase-peptidase enzyme POPB to yield a toxic cyclic octapeptide. POPB first removes 10 residues from the N-terminus. Conformational trapping of the remaining peptide forces the enzyme to release this intermediate rather than proceed to macrocyclization. The enzyme rebinds the remaining peptide in a different conformation and catalyzes macrocyclization of the N-terminal 8 residues. In terms of tissue distribution, expressed in basidiocarps.

In terms of biological role, major toxin belonging to the bicyclic octapeptides amatoxins that acts by binding non-competitively to RNA polymerase II and greatly slowing the elongation of transcripts from target promoters. This chain is Alpha-amanitin proprotein 1, found in Amanita exitialis (Guangzhou destroying angel).